Here is a 406-residue protein sequence, read N- to C-terminus: MARAFLFVLDSFGVGGAPDAAAYGDEGADTLGHIAEFCAAGAADRAGLREGPLSLPNMSELGLMQIARSASGRFPAGMPVPEKVYGIYGAATEISRGKDTPSGHWEIAGTPVSFDWGYFPIEGDAFPQEFIEALCREADVPGILGNCHASGTEIIARLGEEHIRTGKPICYTSSDSVFQVAAHEVHFGLDRLLAFCGLARGLLDSYNIGRVIARPFIGQSASTFQRTGNRRDFSVLPPEPTLLDRLIEQGRHVHAVGKIGDIFAHQGISRVIKANGNEALMDASLSAIDAAEDGDLVFTNFVDFDMIYGHRRDVPGYAAALEAFDARLPDVHKKLKPGDLVVLTADHGCDPTWRGTDHTRERVPVIAYGPGIRSRSIGVRRGYADIGESIARHLGIPAGPHGRSFL.

Mn(2+) contacts are provided by Asp10, Asp305, His310, Asp346, His347, and His358.

The protein belongs to the phosphopentomutase family. Requires Mn(2+) as cofactor.

It is found in the cytoplasm. The catalysed reaction is 2-deoxy-alpha-D-ribose 1-phosphate = 2-deoxy-D-ribose 5-phosphate. The enzyme catalyses alpha-D-ribose 1-phosphate = D-ribose 5-phosphate. Its pathway is carbohydrate degradation; 2-deoxy-D-ribose 1-phosphate degradation; D-glyceraldehyde 3-phosphate and acetaldehyde from 2-deoxy-alpha-D-ribose 1-phosphate: step 1/2. Functionally, isomerase that catalyzes the conversion of deoxy-ribose 1-phosphate (dRib-1-P) and ribose 1-phosphate (Rib-1-P) to deoxy-ribose 5-phosphate (dRib-5-P) and ribose 5-phosphate (Rib-5-P), respectively. In Rhizobium johnstonii (strain DSM 114642 / LMG 32736 / 3841) (Rhizobium leguminosarum bv. viciae), this protein is Phosphopentomutase.